Here is a 410-residue protein sequence, read N- to C-terminus: Retrovirus-related Pol polyprotein from type-1 retrotransposable element R1 2 (410 aa).

A Reverse transcriptase domain is found at 1–118 (GCPQGSIGGP…SCFRYLGVNV (118 aa)). The interval 254-410 (SSVIKLERLV…RLNLELDVNG (157 aa)) is nucleic acid-binding endonuclease.

The enzyme catalyses DNA(n) + a 2'-deoxyribonucleoside 5'-triphosphate = DNA(n+1) + diphosphate. This chain is Retrovirus-related Pol polyprotein from type-1 retrotransposable element R1 2, found in Nasonia vitripennis (Parasitic wasp).